The chain runs to 98 residues: MIAMPTLLSADQRQTLPATLPHWTVHEQSISRELVFNDFNEAFGFMSRVALLAEGRNHHPNWSNVYNRVSITLSTHDLGGLSDLDVELAAAIDQLLPA.

It belongs to the pterin-4-alpha-carbinolamine dehydratase family.

The enzyme catalyses (4aS,6R)-4a-hydroxy-L-erythro-5,6,7,8-tetrahydrobiopterin = (6R)-L-erythro-6,7-dihydrobiopterin + H2O. This is Putative pterin-4-alpha-carbinolamine dehydratase from Parasynechococcus marenigrum (strain WH8102).